Reading from the N-terminus, the 392-residue chain is Obg-like ATPase 1 (392 aa).

The 265-residue stretch at L21–C285 folds into the OBG-type G domain. Residue N30–T35 coordinates ATP. Residues S34 and T55 each coordinate Mg(2+). M233 contacts ATP. Residues N306 to A389 enclose the TGS domain.

This sequence belongs to the TRAFAC class OBG-HflX-like GTPase superfamily. OBG GTPase family. YchF/OLA1 subfamily. As to quaternary structure, monomer. The cofactor is Mg(2+).

Its subcellular location is the cytoplasm. It is found in the nucleus. Hydrolyzes ATP, and can also hydrolyze GTP with lower efficiency. Has lower affinity for GTP. Negatively regulates the G2/M transition in the cell cycle. The polypeptide is Obg-like ATPase 1 (Schizosaccharomyces pombe (strain 972 / ATCC 24843) (Fission yeast)).